The chain runs to 491 residues: Glycogen synthase 1 (491 aa).

An ADP-alpha-D-glucose-binding site is contributed by Lys-15.

Belongs to the glycosyltransferase 1 family. Bacterial/plant glycogen synthase subfamily.

It carries out the reaction [(1-&gt;4)-alpha-D-glucosyl](n) + ADP-alpha-D-glucose = [(1-&gt;4)-alpha-D-glucosyl](n+1) + ADP + H(+). The protein operates within glycan biosynthesis; glycogen biosynthesis. Synthesizes alpha-1,4-glucan chains using ADP-glucose. The sequence is that of Glycogen synthase 1 from Synechococcus sp. (strain JA-2-3B'a(2-13)) (Cyanobacteria bacterium Yellowstone B-Prime).